The sequence spans 231 residues: Cytidylate kinase (231 aa).

12–20 serves as a coordination point for ATP; the sequence is GPSGAGKGT.

This sequence belongs to the cytidylate kinase family. Type 1 subfamily.

The protein resides in the cytoplasm. It catalyses the reaction CMP + ATP = CDP + ADP. The catalysed reaction is dCMP + ATP = dCDP + ADP. This is Cytidylate kinase from Shewanella amazonensis (strain ATCC BAA-1098 / SB2B).